Here is a 326-residue protein sequence, read N- to C-terminus: Metallophosphoesterase domain-containing protein 1 (326 aa).

This sequence belongs to the UPF0046 family.

May have metallophosphoesterase activity (in vitro). The chain is Metallophosphoesterase domain-containing protein 1 (Mpped1) from Mus musculus (Mouse).